The following is a 186-amino-acid chain: Dihydrofolate reductase (186 aa).

One can recognise a DHFR domain in the interval 3–184 (PLNCIVAVSQ…IKYKFEVYEK (182 aa)). Residues Ala9 and 15-21 (GIGKNGD) each bind NADP(+). 30–35 (EYKYFQ) provides a ligand contact to substrate. Lys32 is modified (N6-acetyllysine; alternate). The residue at position 32 (Lys32) is an N6-succinyllysine; alternate. 54-56 (RKT) is a binding site for NADP(+). Arg70 contacts substrate. NADP(+) is bound by residues 76 to 78 (SRE) and 116 to 123 (GGSSVYKE). At Cys162 the chain carries Cysteine derivative; partial.

It belongs to the dihydrofolate reductase family. In terms of assembly, homodimer.

The protein resides in the mitochondrion. The protein localises to the cytoplasm. It carries out the reaction (6S)-5,6,7,8-tetrahydrofolate + NADP(+) = 7,8-dihydrofolate + NADPH + H(+). It participates in cofactor biosynthesis; tetrahydrofolate biosynthesis; 5,6,7,8-tetrahydrofolate from 7,8-dihydrofolate: step 1/1. Its function is as follows. Key enzyme in folate metabolism. Contributes to the de novo mitochondrial thymidylate biosynthesis pathway. Catalyzes an essential reaction for de novo glycine and purine synthesis, and for DNA precursor synthesis. Binds its own mRNA and that of DHFR2. The sequence is that of Dihydrofolate reductase (DHFR) from Sus scrofa (Pig).